Reading from the N-terminus, the 265-residue chain is Osteoclast-associated immunoglobulin-like receptor (265 aa).

The N-terminal stretch at 1–18 (MVLSLILQLSTLWPACRA) is a signal peptide. The Extracellular segment spans residues 19-231 (DFTPTAPLAS…LDYTQGNLIR (213 aa)). Ig-like domains are found at residues 22–115 (PTAP…SQPS) and 125–218 (QLPR…SFEG). N47 carries N-linked (GlcNAc...) asparagine glycosylation. C52 and C99 are joined by a disulfide. An N-linked (GlcNAc...) asparagine glycan is attached at N144. The chain crosses the membrane as a helical span at residues 232–248 (LGLAGMVLICLGIIVTC). Residues 249–265 (DWHSRSSAFDGLLPQQN) lie on the Cytoplasmic side of the membrane.

Belongs to the leukocyte receptor complex/polymeric immunoglobulin receptor (PIR/LRC) family. In terms of tissue distribution, specifically expressed in preosteoclasts or mature osteoclasts.

It localises to the cell membrane. Functionally, regulator of osteoclastogenesis which plays an important bone-specific function in osteoclast differentiation. This Mus musculus (Mouse) protein is Osteoclast-associated immunoglobulin-like receptor (Oscar).